The following is a 155-amino-acid chain: Sec-independent protein translocase protein TatB (155 aa).

Residues 1-21 (MIDLGISKIALIGAVALIVIG) traverse the membrane as a helical segment. Disordered regions lie at residues 81–103 (ASDF…LPGF) and 131–155 (SGIR…SRKA). Polar residues predominate over residues 89–98 (SETTGSTSSD).

The protein belongs to the TatB family. The Tat system comprises two distinct complexes: a TatABC complex, containing multiple copies of TatA, TatB and TatC subunits, and a separate TatA complex, containing only TatA subunits. Substrates initially bind to the TatABC complex, which probably triggers association of the separate TatA complex to form the active translocon.

Its subcellular location is the cell inner membrane. Functionally, part of the twin-arginine translocation (Tat) system that transports large folded proteins containing a characteristic twin-arginine motif in their signal peptide across membranes. Together with TatC, TatB is part of a receptor directly interacting with Tat signal peptides. TatB may form an oligomeric binding site that transiently accommodates folded Tat precursor proteins before their translocation. This chain is Sec-independent protein translocase protein TatB, found in Polaromonas naphthalenivorans (strain CJ2).